The sequence spans 464 residues: Rab GDP-dissociation inhibitor (464 aa).

It belongs to the Rab GDI family. In terms of assembly, interacts with the GDP-bound form of Rab GTPase YPT7.

In terms of biological role, regulates the GDP/GTP exchange reaction of YPT7 by inhibiting the dissociation of GDP from it, and the subsequent binding of GTP to YTP7. This Pyricularia oryzae (strain 70-15 / ATCC MYA-4617 / FGSC 8958) (Rice blast fungus) protein is Rab GDP-dissociation inhibitor (GDI1).